The following is a 203-amino-acid chain: MIVSLRGTVESIGLGSAVIECNGVGYEVLAAPTTLGRLTRGEQARVLTTMVVREESQTLYGFTDDASRRMFVLLQSVSGLGPKLALAAQSVFTTEDIARHIAGGDAKALQKIPGVGKRMAERMIVDLKDKVVGFNDGIPAAAQPQLSIAVDQAVQEQVLEALVGLGFSEKIALPVLSRVLRDSPELSKSQALRAALSELGTKN.

Residues Met-1–Thr-63 form a domain I region. A domain II region spans residues Asp-64–Ala-142. Positions Gln-143–Val-150 are flexible linker. The interval Val-150–Asn-203 is domain III.

The protein belongs to the RuvA family. In terms of assembly, homotetramer. Forms an RuvA(8)-RuvB(12)-Holliday junction (HJ) complex. HJ DNA is sandwiched between 2 RuvA tetramers; dsDNA enters through RuvA and exits via RuvB. An RuvB hexamer assembles on each DNA strand where it exits the tetramer. Each RuvB hexamer is contacted by two RuvA subunits (via domain III) on 2 adjacent RuvB subunits; this complex drives branch migration. In the full resolvosome a probable DNA-RuvA(4)-RuvB(12)-RuvC(2) complex forms which resolves the HJ.

The protein resides in the cytoplasm. Its function is as follows. The RuvA-RuvB-RuvC complex processes Holliday junction (HJ) DNA during genetic recombination and DNA repair, while the RuvA-RuvB complex plays an important role in the rescue of blocked DNA replication forks via replication fork reversal (RFR). RuvA specifically binds to HJ cruciform DNA, conferring on it an open structure. The RuvB hexamer acts as an ATP-dependent pump, pulling dsDNA into and through the RuvAB complex. HJ branch migration allows RuvC to scan DNA until it finds its consensus sequence, where it cleaves and resolves the cruciform DNA. In Corynebacterium diphtheriae (strain ATCC 700971 / NCTC 13129 / Biotype gravis), this protein is Holliday junction branch migration complex subunit RuvA.